Here is a 451-residue protein sequence, read N- to C-terminus: Penicillin-binding protein 4* (451 aa).

Catalysis depends on Ser61, which acts as the Acyl-ester intermediate.

This sequence belongs to the beta-lactamase family.

Its subcellular location is the forespore outer membrane. The protein operates within cell wall biogenesis; peptidoglycan biosynthesis. Functionally, probably involved in peptidoglycan modification during cortex synthesis. The polypeptide is Penicillin-binding protein 4* (pbpE) (Bacillus subtilis (strain 168)).